A 423-amino-acid polypeptide reads, in one-letter code: Serine--tRNA ligase (423 aa).

229-231 (TAE) provides a ligand contact to L-serine. 260-262 (RKE) is a binding site for ATP. Glutamate 283 provides a ligand contact to L-serine. 347 to 350 (EISS) serves as a coordination point for ATP. Serine 383 lines the L-serine pocket.

It belongs to the class-II aminoacyl-tRNA synthetase family. Type-1 seryl-tRNA synthetase subfamily. As to quaternary structure, homodimer. The tRNA molecule binds across the dimer.

The protein resides in the cytoplasm. The enzyme catalyses tRNA(Ser) + L-serine + ATP = L-seryl-tRNA(Ser) + AMP + diphosphate + H(+). The catalysed reaction is tRNA(Sec) + L-serine + ATP = L-seryl-tRNA(Sec) + AMP + diphosphate + H(+). The protein operates within aminoacyl-tRNA biosynthesis; selenocysteinyl-tRNA(Sec) biosynthesis; L-seryl-tRNA(Sec) from L-serine and tRNA(Sec): step 1/1. Its function is as follows. Catalyzes the attachment of serine to tRNA(Ser). Is also able to aminoacylate tRNA(Sec) with serine, to form the misacylated tRNA L-seryl-tRNA(Sec), which will be further converted into selenocysteinyl-tRNA(Sec). The chain is Serine--tRNA ligase from Syntrophotalea carbinolica (strain DSM 2380 / NBRC 103641 / GraBd1) (Pelobacter carbinolicus).